The primary structure comprises 105 residues: Small ribosomal subunit protein uS10 (105 aa).

The protein belongs to the universal ribosomal protein uS10 family. Part of the 30S ribosomal subunit.

Its function is as follows. Involved in the binding of tRNA to the ribosomes. The polypeptide is Small ribosomal subunit protein uS10 (Chlamydia pneumoniae (Chlamydophila pneumoniae)).